The chain runs to 77 residues: ATP synthase subunit c (77 aa).

The next 2 helical transmembrane spans lie at 13–33 (IATVGYGLAAIGPGIGVGIVA) and 55–75 (FLGIAFSEALALIGLATYFIF).

It belongs to the ATPase C chain family. In terms of assembly, F-type ATPases have 2 components, F(1) - the catalytic core - and F(0) - the membrane proton channel. F(1) has five subunits: alpha(3), beta(3), gamma(1), delta(1), epsilon(1). F(0) has three main subunits: a(1), b(2) and c(10-14). The alpha and beta chains form an alternating ring which encloses part of the gamma chain. F(1) is attached to F(0) by a central stalk formed by the gamma and epsilon chains, while a peripheral stalk is formed by the delta and b chains.

The protein resides in the cell membrane. Functionally, f(1)F(0) ATP synthase produces ATP from ADP in the presence of a proton or sodium gradient. F-type ATPases consist of two structural domains, F(1) containing the extramembraneous catalytic core and F(0) containing the membrane proton channel, linked together by a central stalk and a peripheral stalk. During catalysis, ATP synthesis in the catalytic domain of F(1) is coupled via a rotary mechanism of the central stalk subunits to proton translocation. In terms of biological role, key component of the F(0) channel; it plays a direct role in translocation across the membrane. A homomeric c-ring of between 10-14 subunits forms the central stalk rotor element with the F(1) delta and epsilon subunits. The polypeptide is ATP synthase subunit c (Clavibacter michiganensis subsp. michiganensis (strain NCPPB 382)).